A 286-amino-acid polypeptide reads, in one-letter code: ATP synthase gamma chain (286 aa).

The protein belongs to the ATPase gamma chain family. F-type ATPases have 2 components, CF(1) - the catalytic core - and CF(0) - the membrane proton channel. CF(1) has five subunits: alpha(3), beta(3), gamma(1), delta(1), epsilon(1). CF(0) has three main subunits: a, b and c.

It localises to the cell inner membrane. Produces ATP from ADP in the presence of a proton gradient across the membrane. The gamma chain is believed to be important in regulating ATPase activity and the flow of protons through the CF(0) complex. This is ATP synthase gamma chain from Pseudomonas putida (strain ATCC 700007 / DSM 6899 / JCM 31910 / BCRC 17059 / LMG 24140 / F1).